Consider the following 1244-residue polypeptide: Structural polyprotein (1244 aa).

A disordered region spans residues 1 to 113; it reads MNSVFYNPFG…GKRQRTALKF (113 aa). Residues 35–44 show a composition bias toward polar residues; it reads GLTTQIQQLT. Residues 35 to 69 are host transcription inhibition; sequence GLTTQIQQLTRAVRALVLDNATRRQRPAPRTRPRK. Residues 57 to 81 show a composition bias toward basic residues; it reads RRQRPAPRTRPRKPKTQKPKPKKQN. The Nuclear localization signal signature appears at 62–103; sequence APRTRPRKPKTQKPKPKKQNQKPPQQQKKGKNQPQQPKKPKP. Residues 82–97 show a composition bias toward low complexity; that stretch reads QKPPQQQKKGKNQPQQ. The tract at residues 85 to 118 is binding to the viral RNA; that stretch reads PQQQKKGKNQPQQPKKPKPGKRQRTALKFEADRT. A compositionally biased stretch (basic residues) spans 99 to 109; that stretch reads KKPKPGKRQRT. A ribosome-binding region spans residues 103–117; the sequence is PGKRQRTALKFEADR. In terms of domain architecture, Peptidase S3 spans 117 to 267; the sequence is RTFVGKNEDG…KTTHEDTVEW (151 aa). H144 (charge relay system) is an active-site residue. Positions 149-159 match the Nuclear export signal motif; that stretch reads IDHPALAKLKF. Residues 160–165 form an interaction with spike glycoprotein E2 region; sequence TKSSSY. Residue D166 is the Charge relay system of the active site. A dimerization of the capsid protein region spans residues 188–198; it reads PEVFYNWHHGA. Catalysis depends on S218, which acts as the Charge relay system. The segment at 224–228 is dimerization of the capsid protein; sequence DNSGK. The tract at residues 252 to 256 is interaction with spike glycoprotein E2; sequence KKGAA. The interval 268-280 is functions as an uncleaved signal peptide for the precursor of protein E3/E2; that stretch reads SRAITAMCILQNV. Over 268 to 696 the chain is Extracellular; it reads SRAITAMCIL…HYYHLYPFYT (429 aa). N279 carries N-linked (GlcNAc...) asparagine; by host glycosylation. Disulfide bonds link C284–C290, C481–C595, C530–C555, and C532–C549. N-linked (GlcNAc...) asparagine; by host glycosylation occurs at N525. An N-linked (GlcNAc...) asparagine; by host glycan is attached at N647. The helical transmembrane segment at 697–717 threads the bilayer; that stretch reads VTVLSGMGLAICAGLVISILC. Residues 718–751 are Cytoplasmic-facing; sequence CCKARRDCLTPYQLAPNATVPFLVTLCCCFQRTS. The segment at 720–724 is interaction with the capsid protein; that stretch reads KARRD. 3 S-palmitoyl cysteine; by host lipidation sites follow: C725, C745, and C746. C725 and C746 are joined by a disulfide. Over 752-764 the chain is Extracellular; the sequence is ADEFTDTMGYLWQ. 2 helical membrane-spanning segments follow: residues 765–785 and 786–805; these read HSQT…ITLV and RCCS…NKAD. Topologically, residues 806–1218 are extracellular; sequence AYEHTITVPN…KTSWNWITAL (413 aa). 4 disulfide bridges follow: C855–C920, C868–C900, C869–C902, and C874–C884. Residues 890-907 form an E1 fusion peptide loop region; the sequence is VYPFLWGGAQCFCDSENS. Residues N945 and N1051 are each glycosylated (N-linked (GlcNAc...) asparagine; by host). Disulfide bonds link C1065–C1077, C1106–C1181, C1111–C1185, and C1133–C1175. Residues 1219–1239 traverse the membrane as a helical segment; that stretch reads MGGISSIAAIAAIVLVIALVF. Topologically, residues 1240–1244 are cytoplasmic; sequence TAQHR.

As to quaternary structure, homodimer. Homomultimer. Interacts with host karyopherin KPNA4; this interaction allows the nuclear import of the viral capsid protein. Interacts with spike glycoprotein E2. Interacts with host IRAK1; the interaction leads to inhibition of IRAK1-dependent signaling. In terms of assembly, the precursor of protein E3/E2 and E1 form a heterodimer shortly after synthesis. The precursor of protein E3/E2 and E1 form a heterodimer shortly after synthesis. Processing of the precursor of protein E3/E2 into E2 and E3 results in a heterodimer of the spike glycoproteins E2 and E1. Spike at virion surface are constituted of a trimer of E2-E1 heterodimers. After target cell attachment and endocytosis, E1 change conformation to form homotrimers. Interacts with 6K protein. As to quaternary structure, interacts with spike glycoprotein E1. Processing of the precursor of protein E3/E2 into E2 and E3 results in a heterodimer of the spike glycoproteins E2 and E1. Spike at virion surface are constituted of a trimer of E2-E1 heterodimers. Interacts with 6K protein. In terms of assembly, oligomer. Interacts with spike glycoprotein E1. Interacts with spike glycoprotein E2. Structural polyprotein: Specific enzymatic cleavages in vivo yield mature proteins. Capsid protein is auto-cleaved during polyprotein translation, unmasking a signal peptide at the N-terminus of the precursor of E3/E2. The remaining polyprotein is then targeted to the host endoplasmic reticulum, where host signal peptidase cleaves it into pE2, 6K and E1 proteins. pE2 is further processed to mature E3 and E2 by host furin in trans-Golgi vesicle. Post-translationally, palmitoylated via thioester bonds. These palmitoylations may induce disruption of the C-terminus transmembrane. This would result in the reorientation of E2 C-terminus from lumenal to cytoplasmic side. In terms of processing, N-glycosylated. Palmitoylated via thioester bonds.

It is found in the virion. The protein localises to the host cytoplasm. It localises to the host cell membrane. Its subcellular location is the host nucleus. The protein resides in the virion membrane. It is found in the host Golgi apparatus. The protein localises to the host trans-Golgi network. It localises to the host endoplasmic reticulum. It catalyses the reaction Autocatalytic release of the core protein from the N-terminus of the togavirus structural polyprotein by hydrolysis of a -Trp-|-Ser- bond.. Forms an icosahedral capsid with a T=4 symmetry composed of 240 copies of the capsid protein surrounded by a lipid membrane through which penetrate 80 spikes composed of trimers of E1-E2 heterodimers. The capsid protein binds to the viral RNA genome at a site adjacent to a ribosome binding site for viral genome translation following genome release. Possesses a protease activity that results in its autocatalytic cleavage from the nascent structural protein. Following its self-cleavage, the capsid protein transiently associates with ribosomes, and within several minutes the protein binds to viral RNA and rapidly assembles into icosahedric core particles. The resulting nucleocapsid eventually associates with the cytoplasmic domain of the spike glycoprotein E2 at the cell membrane, leading to budding and formation of mature virions. In case of infection, new virions attach to target cells and after clathrin-mediated endocytosis their membrane fuses with the host endosomal membrane. This leads to the release of the nucleocapsid into the cytoplasm, followed by an uncoating event necessary for the genomic RNA to become accessible. The uncoating might be triggered by the interaction of capsid proteins with ribosomes. Binding of ribosomes would release the genomic RNA since the same region is genomic RNA-binding and ribosome-binding. Specifically inhibits interleukin-1 receptor-associated kinase 1/IRAK1-dependent signaling during viral entry, representing a means by which the alphaviruses may evade innate immune detection and activation prior to viral gene expression. Its function is as follows. Provides the signal sequence for the translocation of the precursor of protein E3/E2 to the host endoplasmic reticulum. Furin-cleaved E3 remains associated with spike glycoprotein E1 and mediates pH protection of the latter during the transport via the secretory pathway. After virion release from the host cell, the assembly protein E3 is gradually released in the extracellular space. In terms of biological role, plays a role in viral attachment to target host cell, by binding to the cell receptor. Synthesized as a p62 precursor which is processed by furin at the cell membrane just before virion budding, giving rise to E2-E1 heterodimer. The p62-E1 heterodimer is stable, whereas E2-E1 is unstable and dissociate at low pH. p62 is processed at the last step, presumably to avoid E1 fusion activation before its final export to cell surface. E2 C-terminus contains a transitory transmembrane that would be disrupted by palmitoylation, resulting in reorientation of the C-terminal tail from lumenal to cytoplasmic side. This step is critical since E2 C-terminus is involved in budding by interacting with capsid proteins. This release of E2 C-terminus in cytoplasm occurs lately in protein export, and precludes premature assembly of particles at the endoplasmic reticulum membrane. Functionally, acts as a viroporin that participates in virus glycoprotein processing and transport to the plasma membrane, cell permeabilization and budding of viral particles. Disrupts the calcium homeostasis of the cell, probably at the endoplasmic reticulum level. This leads to cytoplasmic calcium elevation. Because of its lipophilic properties, the 6K protein is postulated to influence the selection of lipids that interact with the transmembrane domains of the glycoproteins, which, in turn, affects the deformability of the bilayer required for the extreme curvature that occurs as budding proceeds. Present in low amount in virions, about 3% compared to viral glycoproteins. Class II viral fusion protein. Fusion activity is inactive as long as E1 is bound to E2 in mature virion. After virus attachment to target cell and endocytosis, acidification of the endosome induce dissociation of E1/E2 heterodimer and concomitant trimerization of the E1 subunits. This E1 trimer is fusion active, and promotes release of viral nucleocapsid in cytoplasm after endosome and viral membrane fusion. Efficient fusion requires the presence of cholesterol and sphingolipid in the target membrane. The polypeptide is Structural polyprotein (Aedes (AURAV)).